Here is a 511-residue protein sequence, read N- to C-terminus: MKKRALVSVSDKTGVVEFVKGLLEQGIEVISTGGTKKLLEENGLQVIGISEVTGFPEIMDGRVKTLHPNIHGGLLAVRDNETHVAQMNELGMEPIDFVVVNLYPFKETIAKPDVTFADAIENIDIGGPTMIRSAAKNHKFVSVIVDPVDYDIVLAELKENGEVKEETKRKLAAKVFRHTAAYDALISNYLTEQMGEESPETLTVTFEKKQDLRYGENPHQKATFYKAPFAVTSSVAYAEQLHGKELSYNNINDADAALSIVKEFTEPAVVAVKHMNPCGVGVGTDIHEAYTRAYEADPVSIFGGIIAANREIDKATAEKLHEIFLEIIIAPSFSKEALEVLQSKKNLRLLTVNIEKATSASKKLTSVQGGLLVQEEDTLSLDESTISIPTKREPSEQEWKDLKLAWKVVKHVKSNAIVLAKDDMTIGVGAGQMNRVGSAKIAITQAGEKAQGSALASDAFFPMPDTLEEAAKAGITAIIQPGGSIRDEDSIKVADTYGIAMVFTGVRHFKH.

One can recognise an MGS-like domain in the interval 1 to 145; it reads MKKRALVSVS…KNHKFVSVIV (145 aa).

The protein belongs to the PurH family.

It catalyses the reaction (6R)-10-formyltetrahydrofolate + 5-amino-1-(5-phospho-beta-D-ribosyl)imidazole-4-carboxamide = 5-formamido-1-(5-phospho-D-ribosyl)imidazole-4-carboxamide + (6S)-5,6,7,8-tetrahydrofolate. The enzyme catalyses IMP + H2O = 5-formamido-1-(5-phospho-D-ribosyl)imidazole-4-carboxamide. Its pathway is purine metabolism; IMP biosynthesis via de novo pathway; 5-formamido-1-(5-phospho-D-ribosyl)imidazole-4-carboxamide from 5-amino-1-(5-phospho-D-ribosyl)imidazole-4-carboxamide (10-formyl THF route): step 1/1. It functions in the pathway purine metabolism; IMP biosynthesis via de novo pathway; IMP from 5-formamido-1-(5-phospho-D-ribosyl)imidazole-4-carboxamide: step 1/1. The sequence is that of Bifunctional purine biosynthesis protein PurH from Bacillus cereus (strain Q1).